The primary structure comprises 312 residues: Fibrinogen-like protein 1 (312 aa).

The first 22 residues, 1–22, serve as a signal peptide directing secretion; sequence MAKVFSFILVTTALTMGREISA. Positions 23-61 form a coiled coil; the sequence is LEDCAQEQMRLRAQVRLLETRVKQQQVKIKQLLQENEVQ. Positions 74 to 306 constitute a Fibrinogen C-terminal domain; that stretch reads LGSKRQYADC…SVVMKIRPND (233 aa). Disulfide bonds link cysteine 83–cysteine 112 and cysteine 248–cysteine 261.

As to quaternary structure, homodimer. Interacts (via the Fibrinogen C-terminal domain) with LAG3 (via Ig-like domains 1 and 2). In terms of tissue distribution, under normal conditions, liver-specific.

It localises to the secreted. In terms of biological role, immune suppressive molecule that inhibits antigen-specific T-cell activation by acting as a major ligand of LAG3. Responsible for LAG3 T-cell inhibitory function. Binds LAG3 independently from MHC class II (MHC-II). Secreted by, and promotes growth of, hepatocytes. This is Fibrinogen-like protein 1 from Homo sapiens (Human).